A 234-amino-acid chain; its full sequence is Thrombin-like enzyme contortrixobin (234 aa).

A Peptidase S1 domain is found at 1–225 (VVGGDECNIN…YNDWIQSIIA (225 aa)). Cystine bridges form between C7–C139, C26–C42, C74–C232, C118–C186, C150–C165, and C176–C201. Catalysis depends on charge relay system residues H41 and D86. S180 acts as the Charge relay system in catalysis.

In terms of assembly, monomer. Not glycosylated. Expressed by the venom gland.

The protein localises to the secreted. With respect to regulation, strongly inhibited by diisopropylfluorophosphate (DFP) and to a lesser extent by PMSF, benzamidine and 4,6-diamidino-2-phenylindole. Low inhibition by hirudin. Its function is as follows. Thrombin-like snake venom serine protease that cleaves beta chain of fibrinogen (FGB), releasing fibrinopeptide B. Has a coagulant activity activating blood coagulation factors V (F5) and XIII (F13A1). This chain is Thrombin-like enzyme contortrixobin, found in Agkistrodon contortrix contortrix (Southern copperhead).